The chain runs to 117 residues: Large ribosomal subunit protein bL19 (117 aa).

Belongs to the bacterial ribosomal protein bL19 family.

Functionally, this protein is located at the 30S-50S ribosomal subunit interface and may play a role in the structure and function of the aminoacyl-tRNA binding site. This chain is Large ribosomal subunit protein bL19, found in Vibrio parahaemolyticus serotype O3:K6 (strain RIMD 2210633).